The sequence spans 580 residues: Laccase-6 (580 aa).

An N-terminal signal peptide occupies residues Met-1–Ala-22. 2 consecutive Plastocyanin-like domains span residues Asn-30–Ala-148 and Glu-158–Ala-317. 2 N-linked (GlcNAc...) asparagine glycosylation sites follow: Asn-44 and Asn-78. Residues His-82, His-84, His-127, and His-129 each coordinate Cu cation. Residues Asn-306, Asn-335, Asn-385, Asn-397, and Asn-462 are each glycosylated (N-linked (GlcNAc...) asparagine). One can recognise a Plastocyanin-like 3 domain in the interval Asp-424–Pro-564. Cu cation-binding residues include His-480, His-483, His-485, His-543, Cys-544, His-545, and His-549.

It belongs to the multicopper oxidase family. It depends on Cu cation as a cofactor.

The protein resides in the secreted. It is found in the extracellular space. The protein localises to the apoplast. It carries out the reaction 4 hydroquinone + O2 = 4 benzosemiquinone + 2 H2O. Lignin degradation and detoxification of lignin-derived products. This is Laccase-6 (LAC6) from Oryza sativa subsp. japonica (Rice).